The following is a 272-amino-acid chain: Exosome complex component MTR3 (272 aa).

Residues 1-36 (MPGDHRRIRGPEESQPPQLYAADEEEAPGTRDPTRL) are disordered.

The protein belongs to the RNase PH family. Component of the RNA exosome core complex (Exo-9), composed of EXOSC1, EXOSC2, EXOSC3, EXOSC4, EXOSC5, EXOSC6, EXOSC7, EXOSC8 and EXOSC9; within the complex interacts with EXOSC1, EXOSC7 and EXOSC8. The catalytically inactive Exo-9 may associate with the catalytic subunit EXOSC10/RRP6. Exo-9 may associate with DIS3 to form the nucleolar exosome complex, or DIS3L to form the cytoplasmic exosome complex. Exo-9 is formed by a hexameric base ring consisting of the heterodimers EXOSC4-EXOSC9, EXOSC5-EXOSC8 and EXOSC6-EXOSC7, and a cap ring consisting of EXOSC1, EXOSC2 and EXOSC3. The RNA exosome complex associates with cofactors EXOSC10/RRP6, C1D/RRP47, MPHOSPH6/MPP6 and MTREX/MTR4.

It localises to the cytoplasm. Its subcellular location is the nucleus. It is found in the nucleolus. Non-catalytic component of the RNA exosome complex which has 3'-&gt;5' exoribonuclease activity and participates in a multitude of cellular RNA processing and degradation events. In the nucleus, the RNA exosome complex is involved in proper maturation of stable RNA species such as rRNA, snRNA and snoRNA, in the elimination of RNA processing by-products and non-coding 'pervasive' transcripts, such as antisense RNA species and promoter-upstream transcripts (PROMPTs), and of mRNAs with processing defects, thereby limiting or excluding their export to the cytoplasm. The RNA exosome may be involved in Ig class switch recombination (CSR) and/or Ig variable region somatic hypermutation (SHM) by targeting AICDA deamination activity to transcribed dsDNA substrates. In the cytoplasm, the RNA exosome complex is involved in general mRNA turnover and specifically degrades inherently unstable mRNAs containing AU-rich elements (AREs) within their 3' untranslated regions, and in RNA surveillance pathways, preventing translation of aberrant mRNAs. It seems to be involved in degradation of histone mRNA. The catalytic inactive RNA exosome core complex of 9 subunits (Exo-9) is proposed to play a pivotal role in the binding and presentation of RNA for ribonucleolysis, and to serve as a scaffold for the association with catalytic subunits and accessory proteins or complexes. The sequence is that of Exosome complex component MTR3 (EXOSC6) from Homo sapiens (Human).